Here is a 617-residue protein sequence, read N- to C-terminus: uncharacterized protein (617 aa).

The helical transmembrane segment at 103 to 123 threads the bilayer; the sequence is AGVLLAKFFPLLFLYPLTYLA. The 410-residue stretch at 200-609 folds into the Protein kinase domain; sequence FETREPVGSG…DILEAAKPFL (410 aa). ATP-binding positions include 206–214 and Lys-302; that span reads VGSGCVAQV. The Proton acceptor role is filled by Asp-436.

This sequence belongs to the protein kinase superfamily. ADCK protein kinase family.

It is found in the mitochondrion. It localises to the membrane. Its function is as follows. The function of this protein is not yet clear. It is not known if it has protein kinase activity and what type of substrate it would phosphorylate (Ser, Thr or Tyr). Involved in the mitochondrial import of CoQ precursors, plays a role in muscle mitochondrial function and fatty acid beta-oxidation. This is an uncharacterized protein from Mus musculus (Mouse).